The primary structure comprises 144 residues: uncharacterized protein (144 aa).

The stretch at glutamate 48 to leucine 119 forms a coiled coil.

This is an uncharacterized protein from Archaeoglobus fulgidus (strain ATCC 49558 / DSM 4304 / JCM 9628 / NBRC 100126 / VC-16).